Here is a 359-residue protein sequence, read N- to C-terminus: tRNA-specific 2-thiouridylase MnmA (359 aa).

Residues 9–16 (GISGGVDS) and Met-35 each bind ATP. Positions 95–97 (NPD) are interaction with target base in tRNA. The Nucleophile role is filled by Cys-100. A disulfide bond links Cys-100 and Cys-197. Residue Gly-124 coordinates ATP. The interval 147 to 149 (KDQ) is interaction with tRNA. Cys-197 functions as the Cysteine persulfide intermediate in the catalytic mechanism. An interaction with tRNA region spans residues 309–310 (RY).

It belongs to the MnmA/TRMU family.

It is found in the cytoplasm. It catalyses the reaction S-sulfanyl-L-cysteinyl-[protein] + uridine(34) in tRNA + AH2 + ATP = 2-thiouridine(34) in tRNA + L-cysteinyl-[protein] + A + AMP + diphosphate + H(+). Functionally, catalyzes the 2-thiolation of uridine at the wobble position (U34) of tRNA, leading to the formation of s(2)U34. The protein is tRNA-specific 2-thiouridylase MnmA of Francisella tularensis subsp. tularensis (strain WY96-3418).